A 249-amino-acid chain; its full sequence is Metallo-beta-lactamase type 2 (249 aa).

The first 22 residues, 1-22 (MLKKIKISLILALGLTSLQAFG), serve as a signal peptide directing secretion. Positions 98, 100, 102, 161, and 180 each coordinate Zn(2+). A substrate-binding site is contributed by lysine 183. Histidine 222 is a binding site for Zn(2+).

This sequence belongs to the metallo-beta-lactamase superfamily. Class-B beta-lactamase family. As to quaternary structure, monomer. Zn(2+) is required as a cofactor.

It localises to the periplasm. It carries out the reaction a beta-lactam + H2O = a substituted beta-amino acid. Its function is as follows. Confers resistance to the different beta-lactams antibiotics (penicillin, cephalosporin and carbapenem) via the hydrolysis of the beta-lactam ring. The chain is Metallo-beta-lactamase type 2 (blaB3) from Elizabethkingia meningoseptica (Chryseobacterium meningosepticum).